Reading from the N-terminus, the 356-residue chain is Phospho-N-acetylmuramoyl-pentapeptide-transferase (356 aa).

Transmembrane regions (helical) follow at residues 25 to 45, 70 to 90, 93 to 113, 138 to 158, 164 to 184, 195 to 215, 232 to 252, 258 to 278, 284 to 304, and 333 to 353; these read TVAA…SIIS, GTPT…ALLW, LFNI…AIGF, FLVA…GLAL, YFIN…VGLG, GLAI…AYLS, VGEL…FLWF, AIFM…IVSV, IVLI…IIQV, and QIVV…LSTL.

It belongs to the glycosyltransferase 4 family. MraY subfamily. It depends on Mg(2+) as a cofactor.

It is found in the cell inner membrane. The enzyme catalyses UDP-N-acetyl-alpha-D-muramoyl-L-alanyl-gamma-D-glutamyl-meso-2,6-diaminopimeloyl-D-alanyl-D-alanine + di-trans,octa-cis-undecaprenyl phosphate = di-trans,octa-cis-undecaprenyl diphospho-N-acetyl-alpha-D-muramoyl-L-alanyl-D-glutamyl-meso-2,6-diaminopimeloyl-D-alanyl-D-alanine + UMP. The protein operates within cell wall biogenesis; peptidoglycan biosynthesis. Its function is as follows. Catalyzes the initial step of the lipid cycle reactions in the biosynthesis of the cell wall peptidoglycan: transfers peptidoglycan precursor phospho-MurNAc-pentapeptide from UDP-MurNAc-pentapeptide onto the lipid carrier undecaprenyl phosphate, yielding undecaprenyl-pyrophosphoryl-MurNAc-pentapeptide, known as lipid I. This is Phospho-N-acetylmuramoyl-pentapeptide-transferase from Bartonella bacilliformis (strain ATCC 35685 / KC583 / Herrer 020/F12,63).